The sequence spans 319 residues: Transcription initiation factor IIB 6 (319 aa).

The segment covering 1 to 16 (MTDARMRSREQERTDE) has biased composition (basic and acidic residues). The disordered stretch occupies residues 1–33 (MTDARMRSREQERTDETESESTDGCPECGGLVV). The TFIIB-type zinc finger occupies 21 to 51 (STDGCPECGGLVVNDEEHGESVCADCGLVVE). Residues C25, C28, C43, and C46 each contribute to the Zn(2+) site. Residues 59 to 74 (PEWRAFDSKEKDEKSR) show a composition bias toward basic and acidic residues. Positions 59–89 (PEWRAFDSKEKDEKSRVGAPTTNTMHDKGLS) are disordered. Repeat copies occupy residues 137 to 220 (GEID…VREL) and 231 to 312 (SYVP…ELLE).

This sequence belongs to the TFIIB family.

In terms of biological role, stabilizes TBP binding to an archaeal box-A promoter. Also responsible for recruiting RNA polymerase II to the pre-initiation complex (DNA-TBP-TFIIB). In Halobacterium salinarum (strain ATCC 700922 / JCM 11081 / NRC-1) (Halobacterium halobium), this protein is Transcription initiation factor IIB 6.